The chain runs to 430 residues: MDRIRIVGGNELNGIIPISGAKNAALPLMIASLLTSDTLTLENVPHLADVELLMRILGNHGVDVAVNGRRERQEDSYARTIHFTCRTIVDTTASYELVSKMRASFWVIGPLLAREGHCRVSLPGGCAIGTRPVDLFIEGLTALGATMEIDAGYINAKAPDGGLIGARYTFPKVSVGATHVLMMAATLARGTTVIGNAAREPEVVDLANCLNAMGAKISGAGTSTITIEGVTSLSGARHRVLPDRIETGTYAMAVAMAGGDVVLENTDVALLDTALETLRRAGADISATNNGMRVRRNGAGIKPVDIVTDPFPGFPTDLQAQFMALMTRSSGISHVTETIFENRFMHVQELARLGARISLSGQTAKIEGVERLRGAPVMATDLRASVSLVIAGLAAEGETTVSRVYHLDRGFERLEAKLTRCGAVVERISE.

22 to 23 is a phosphoenolpyruvate binding site; it reads KN. Arg-102 is a UDP-N-acetyl-alpha-D-glucosamine binding site. Cys-126 acts as the Proton donor in catalysis. Position 126 is a 2-(S-cysteinyl)pyruvic acid O-phosphothioketal (Cys-126). UDP-N-acetyl-alpha-D-glucosamine is bound by residues 131–135, 172–175, Asp-317, and Ile-339; these read RPVDL and KVSV.

This sequence belongs to the EPSP synthase family. MurA subfamily.

The protein resides in the cytoplasm. The catalysed reaction is phosphoenolpyruvate + UDP-N-acetyl-alpha-D-glucosamine = UDP-N-acetyl-3-O-(1-carboxyvinyl)-alpha-D-glucosamine + phosphate. Its pathway is cell wall biogenesis; peptidoglycan biosynthesis. Functionally, cell wall formation. Adds enolpyruvyl to UDP-N-acetylglucosamine. The sequence is that of UDP-N-acetylglucosamine 1-carboxyvinyltransferase from Rhizobium etli (strain ATCC 51251 / DSM 11541 / JCM 21823 / NBRC 15573 / CFN 42).